A 360-amino-acid chain; its full sequence is NAD(P)H-quinone oxidoreductase subunit 1, chloroplastic (360 aa).

9 helical membrane-spanning segments follow: residues 27–47, 98–118, 129–149, 165–185, 203–223, 248–268, 269–289, 297–317, and 340–360; these read IWIF…VLVI, FSIG…VIPF, IGIF…LMSG, AAQS…ISLL, FWGW…ISSL, YSGI…LISS, LFVT…ISIL, IFGT…FLFI, and FLLP…LFSL.

This sequence belongs to the complex I subunit 1 family. NDH is composed of at least 16 different subunits, 5 of which are encoded in the nucleus.

The protein localises to the plastid. It is found in the chloroplast thylakoid membrane. It catalyses the reaction a plastoquinone + NADH + (n+1) H(+)(in) = a plastoquinol + NAD(+) + n H(+)(out). The catalysed reaction is a plastoquinone + NADPH + (n+1) H(+)(in) = a plastoquinol + NADP(+) + n H(+)(out). NDH shuttles electrons from NAD(P)H:plastoquinone, via FMN and iron-sulfur (Fe-S) centers, to quinones in the photosynthetic chain and possibly in a chloroplast respiratory chain. The immediate electron acceptor for the enzyme in this species is believed to be plastoquinone. Couples the redox reaction to proton translocation, and thus conserves the redox energy in a proton gradient. The chain is NAD(P)H-quinone oxidoreductase subunit 1, chloroplastic from Lepidium virginicum (Virginia pepperweed).